Here is a 155-residue protein sequence, read N- to C-terminus: UPF0735 ACT domain-containing protein CA_C1234 (155 aa).

In terms of domain architecture, ACT spans 79 to 154 (TISILIEHRR…NVLKVEIVAM (76 aa)).

It belongs to the UPF0735 family.

The chain is UPF0735 ACT domain-containing protein CA_C1234 from Clostridium acetobutylicum (strain ATCC 824 / DSM 792 / JCM 1419 / IAM 19013 / LMG 5710 / NBRC 13948 / NRRL B-527 / VKM B-1787 / 2291 / W).